Here is a 558-residue protein sequence, read N- to C-terminus: MTSSEEVVEVTVVKAPEAGGGKLSRRKIRKKDAGVDGLVKWERFLPKIALRVLLVEADDSTRQIIAALLRKCSYRVAAVPDGLKAWEMLKGKPESVDLILTEVDLPSISGYALLTLIMEHDICKNIPVIMMSTQDSVNTVYKCMLKGAADYLVKPLRRNELRNLWQHVWRRQTSLAPDSFPWNESVGQQKAEGASANNSNGKRDDHVVSGNGGDAQSSCTRPEMEGESADVEVSARDAVQMECAKSQFNETRLLANELQSKQAEAIDFMGASFRRTGRRNREESVAQYESRIELDLSLRRPNASENQSSGDRPSLHPSSASAFTRYVHRPLQTQCSASPVVTDQRKNVAASQDDNIVLMNQYNTSEPPPNAPRRNDTSFYTGADSPGPPFSNQLNSWPGQSSYPTPTPINNIQFRDPNTAYTSAMAPASLSPSPSSVSPHEYSSMFHPFNSKPEGLQDRDCSMDVDERRYVSSATEHSAIGNHIDQLIEKKNEDGYSLSVGKIQQSLQREAALTKFRMKRKDRCYEKKVRYESRKKLAEQRPRIKGQFVRQVQSTQAP.

The Response regulatory domain occupies 51 to 169 (RVLLVEADDS…ELRNLWQHVW (119 aa)). The segment at 180 to 233 (FPWNESVGQQKAEGASANNSNGKRDDHVVSGNGGDAQSSCTRPEMEGESADVEV) is disordered. Residues 240–260 (QMECAKSQFNETRLLANELQS) are a coiled coil. Disordered stretches follow at residues 297–319 (SLRRPNASENQSSGDRPSLHPSS) and 535–558 (KKLAEQRPRIKGQFVRQVQSTQAP). A compositionally biased stretch (polar residues) spans 303 to 319 (ASENQSSGDRPSLHPSS). In terms of domain architecture, CCT spans 509–551 (REAALTKFRMKRKDRCYEKKVRYESRKKLAEQRPRIKGQFVRQ).

The protein belongs to the ARR-like family. As to quaternary structure, interacts with ADO1 and ADO2. Interacts with SPY (via N-terminus). Phosphorylation varies throughout the diurnal cycle and enhances ADO1 binding. In terms of processing, O-fucosylated by SPY. O-fucosylation promotes APRR5 proteolysis.

The protein localises to the nucleus. Transcriptional repressor of CCA1 and LHY, thereby controlling photoperiodic flowering response. Involved in the positive and negative feedback loops of the circadian clock. With RVE8, forms a negative feedback loop of the circadian clock. Expression of several members of the ARR-like family is controlled by circadian rhythm. Proteolytic substrate of the E3 ubiquitin ligase SCF(ADO1) complex. APRR9, APRR7, and APRR5 coordinately act on the upstream region of the target genes to repress their expression from noon until midnight. The particular coordinated sequential expression of APRR9, APRR7, APRR5, APRR3 and APPR1 result to circadian waves that may be at the basis of the endogenous circadian clock. Negative regulator of shade avoidance response. Involved in the inhibition of leaf expansion in shade avoidance response. In Arabidopsis thaliana (Mouse-ear cress), this protein is Two-component response regulator-like APRR5 (APRR5).